The following is a 295-amino-acid chain: Acetyl-coenzyme A carboxylase carboxyl transferase subunit beta (295 aa).

In terms of domain architecture, CoA carboxyltransferase N-terminal spans 25 to 294 (VWTKCTSCEQ…PFNAEELSDT (270 aa)). Zn(2+) is bound by residues C29, C32, C48, and C51. Residues 29–51 (CTSCEQVLYRDELKRHLEVCPKC) form a C4-type zinc finger.

The protein belongs to the AccD/PCCB family. In terms of assembly, acetyl-CoA carboxylase is a heterohexamer composed of biotin carboxyl carrier protein (AccB), biotin carboxylase (AccC) and two subunits each of ACCase subunit alpha (AccA) and ACCase subunit beta (AccD). Zn(2+) serves as cofactor.

It localises to the cytoplasm. It carries out the reaction N(6)-carboxybiotinyl-L-lysyl-[protein] + acetyl-CoA = N(6)-biotinyl-L-lysyl-[protein] + malonyl-CoA. The protein operates within lipid metabolism; malonyl-CoA biosynthesis; malonyl-CoA from acetyl-CoA: step 1/1. In terms of biological role, component of the acetyl coenzyme A carboxylase (ACC) complex. Biotin carboxylase (BC) catalyzes the carboxylation of biotin on its carrier protein (BCCP) and then the CO(2) group is transferred by the transcarboxylase to acetyl-CoA to form malonyl-CoA. This chain is Acetyl-coenzyme A carboxylase carboxyl transferase subunit beta, found in Mannheimia succiniciproducens (strain KCTC 0769BP / MBEL55E).